The chain runs to 455 residues: Zinc finger and BTB domain-containing protein 8A.2 (455 aa).

In terms of domain architecture, BTB spans 24–92 (CDCHIMIDGH…MYSGKLNLSG (69 aa)). C2H2-type zinc fingers lie at residues 299 to 321 (FKCPFCTHTVKRKADLKRHLLCH) and 327 to 350 (YPCQACGKRFTRLEHVRSHYRTIH).

The protein localises to the nucleus. May be involved in transcriptional regulation. The polypeptide is Zinc finger and BTB domain-containing protein 8A.2 (zbtb8a.2) (Xenopus tropicalis (Western clawed frog)).